The sequence spans 347 residues: Twinfilin-2 (347 aa).

2 consecutive ADF-H domains span residues 3-137 and 175-311; these read LVLV…RHIT and GLAF…DEVH. The tract at residues 314-347 is disordered; the sequence is QHAHKQAFAKPRGPAGKRGNKRLIKGGGENGGNS. Gly residues predominate over residues 338-347; sequence KGGGENGGNS.

Belongs to the actin-binding proteins ADF family. Twinfilin subfamily. Interacts with G-actin; ADP-actin form and capping protein (CP).

Its subcellular location is the cytoplasm. The protein resides in the cytoskeleton. It localises to the perinuclear region. Its function is as follows. Actin-binding protein involved in motile and morphological processes. Inhibits actin polymerization, likely by sequestering G-actin. This Danio rerio (Zebrafish) protein is Twinfilin-2 (twf2).